We begin with the raw amino-acid sequence, 261 residues long: tRNA pseudouridine synthase A (261 aa).

D53 acts as the Nucleophile in catalysis. Y111 is a substrate binding site.

It belongs to the tRNA pseudouridine synthase TruA family. Homodimer.

The enzyme catalyses uridine(38/39/40) in tRNA = pseudouridine(38/39/40) in tRNA. Its function is as follows. Formation of pseudouridine at positions 38, 39 and 40 in the anticodon stem and loop of transfer RNAs. In Shouchella clausii (strain KSM-K16) (Alkalihalobacillus clausii), this protein is tRNA pseudouridine synthase A.